The chain runs to 474 residues: Ribulose bisphosphate carboxylase large chain (474 aa).

Substrate contacts are provided by Asn122 and Thr172. Lys174 (proton acceptor) is an active-site residue. Lys176 contacts substrate. Positions 200, 202, and 203 each coordinate Mg(2+). An N6-carboxylysine modification is found at Lys200. His293 acts as the Proton acceptor in catalysis. The substrate site is built by Arg294, His326, and Ser378.

The protein belongs to the RuBisCO large chain family. Type I subfamily. Heterohexadecamer of 8 large chains and 8 small chains; disulfide-linked. The disulfide link is formed within the large subunit homodimers. Mg(2+) is required as a cofactor. In terms of processing, the disulfide bond which can form in the large chain dimeric partners within the hexadecamer appears to be associated with oxidative stress and protein turnover.

It is found in the carboxysome. It catalyses the reaction 2 (2R)-3-phosphoglycerate + 2 H(+) = D-ribulose 1,5-bisphosphate + CO2 + H2O. It carries out the reaction D-ribulose 1,5-bisphosphate + O2 = 2-phosphoglycolate + (2R)-3-phosphoglycerate + 2 H(+). Its function is as follows. RuBisCO catalyzes two reactions: the carboxylation of D-ribulose 1,5-bisphosphate, the primary event in carbon dioxide fixation, as well as the oxidative fragmentation of the pentose substrate in the photorespiration process. Both reactions occur simultaneously and in competition at the same active site. The protein is Ribulose bisphosphate carboxylase large chain of Gloeobacter violaceus (strain ATCC 29082 / PCC 7421).